An 88-amino-acid chain; its full sequence is Small ribosomal subunit protein bS20 (88 aa).

A disordered region spans residues 1–20 (MPNIKSAIKRTKTNNERRAH).

Belongs to the bacterial ribosomal protein bS20 family.

Functionally, binds directly to 16S ribosomal RNA. In Bacillus velezensis (strain DSM 23117 / BGSC 10A6 / LMG 26770 / FZB42) (Bacillus amyloliquefaciens subsp. plantarum), this protein is Small ribosomal subunit protein bS20.